The chain runs to 39 residues: Photosystem II reaction center protein L (39 aa).

Residues S18–F38 traverse the membrane as a helical segment.

This sequence belongs to the PsbL family. As to quaternary structure, PSII is composed of 1 copy each of membrane proteins PsbA, PsbB, PsbC, PsbD, PsbE, PsbF, PsbH, PsbI, PsbJ, PsbK, PsbL, PsbM, PsbT, PsbX, PsbY, Psb30/Ycf12, peripheral proteins PsbO, CyanoQ (PsbQ), PsbU, PsbV and a large number of cofactors. It forms dimeric complexes.

It is found in the cellular thylakoid membrane. Its function is as follows. One of the components of the core complex of photosystem II (PSII). PSII is a light-driven water:plastoquinone oxidoreductase that uses light energy to abstract electrons from H(2)O, generating O(2) and a proton gradient subsequently used for ATP formation. It consists of a core antenna complex that captures photons, and an electron transfer chain that converts photonic excitation into a charge separation. This subunit is found at the monomer-monomer interface and is required for correct PSII assembly and/or dimerization. This chain is Photosystem II reaction center protein L, found in Prochlorococcus marinus (strain SARG / CCMP1375 / SS120).